The primary structure comprises 600 residues: DNA polymerase alpha subunit B (600 aa).

Residues 107–165 (ETLLSSYTTPSKGPLKRVSSTPETPLTKRSVAARSPRQLLSPSSFSPSATPSQKYTSRT) are disordered. Ser126 is modified (phosphoserine). Phosphothreonine occurs at positions 127 and 130. Positions 139 to 159 (ARSPRQLLSPSSFSPSATPSQ) are enriched in low complexity. A phosphoserine mark is found at Ser141, Ser147, Ser152, and Ser154.

It belongs to the DNA polymerase alpha subunit B family. In terms of assembly, component of the alpha DNA polymerase complex (also known as the alpha DNA polymerase-primase complex) consisting of four subunits: the catalytic subunit POLA1, the regulatory subunit POLA2, and the primase complex subunits PRIM1 and PRIM2 respectively. Within the complex, POLA1 directly interacts with PRIM2. In terms of processing, phosphorylated in a cell cycle-dependent manner, in G2/M phase.

The protein localises to the nucleus. Its function is as follows. Accessory subunit of the DNA polymerase alpha complex (also known as the alpha DNA polymerase-primase complex) which plays an essential role in the initiation of DNA synthesis. During the S phase of the cell cycle, the DNA polymerase alpha complex (composed of a catalytic subunit POLA1, an accessory subunit POLA2 and two primase subunits, the catalytic subunit PRIM1 and the regulatory subunit PRIM2) is recruited to DNA at the replicative forks via direct interactions with MCM10 and WDHD1. The primase subunit of the polymerase alpha complex initiates DNA synthesis by oligomerising short RNA primers on both leading and lagging strands. These primers are initially extended by the polymerase alpha catalytic subunit and subsequently transferred to polymerase delta and polymerase epsilon for processive synthesis on the lagging and leading strand, respectively. In Mus musculus (Mouse), this protein is DNA polymerase alpha subunit B (Pola2).